A 159-amino-acid chain; its full sequence is MSYSITTPSHFVFLSSAWADPIELINLCTNALGNQFQTQQARTVVQRQFSEVWKPSPQVTVRFPDRDFKVYRYNAVLDPLVTALLGAFDTRNRIIEVENQANPTTAETLDATRRVDDATVAIRSAINNLMVELIRGTGSYNRSSFESSSGLVWTSGPAT.

N-acetylserine; by host is present on serine 2.

This sequence belongs to the virgaviridae capsid protein family.

Its subcellular location is the virion. In terms of biological role, capsid protein self-assembles to form rod-shaped virions about 18 nm in diameter with a central canal enclosing the viral genomic RNA. The sequence is that of Capsid protein (CP) from Tobacco mosaic virus (strain 06) (TMV-06).